Consider the following 607-residue polypeptide: Albumin B (607 aa).

The N-terminal stretch at 1–18 (MKWITLICLLISSSFIES) is a signal peptide. Positions 19 to 24 (RILFKR) are excised as a propeptide. 3 Albumin domains span residues 22–209 (FKRD…KQLM), 210–402 (KQSH…RFMN), and 403–600 (EAKE…VLIE). Position 30 (His30) interacts with Cu cation. 17 disulfide bridges follow: Cys80–Cys88, Cys101–Cys117, Cys116–Cys127, Cys147–Cys192, Cys191–Cys200, Cys223–Cys269, Cys268–Cys276, Cys288–Cys302, Cys301–Cys312, Cys339–Cys384, Cys383–Cys392, Cys415–Cys461, Cys460–Cys471, Cys484–Cys500, Cys499–Cys510, Cys537–Cys582, and Cys581–Cys590.

It belongs to the ALB/AFP/VDB family. In terms of tissue distribution, plasma.

The protein localises to the secreted. Its function is as follows. Serum albumin, the main protein of plasma, has a good binding capacity for water, Ca(2+), Na(+), K(+), fatty acids, hormones, bilirubin and drugs. Its main function is the regulation of the colloidal osmotic pressure of blood. The sequence is that of Albumin B (alb-b) from Xenopus laevis (African clawed frog).